The primary structure comprises 254 residues: NAD-dependent glycerol dehydrogenase (254 aa).

18 to 47 (VVTGAASGIGKAMAELFSEKGAYVVLLDIK) is a binding site for NAD(+). Tyr-160 functions as the Proton acceptor in the catalytic mechanism. Lys-164 is an NAD(+) binding site.

This sequence belongs to the short-chain dehydrogenases/reductases (SDR) family. The cofactor is Mg(2+). Mn(2+) serves as cofactor.

The protein resides in the cytoplasm. It carries out the reaction glycerol + NAD(+) = dihydroxyacetone + NADH + H(+). With respect to regulation, inhibited by Zn(2+). Functionally, involved in the glycerol metabolism. Catalyzes the NAD-dependent oxidation of glycerol to dihydroxyacetone (glycerone). GolD specifically uses NAD. In Listeria innocua serovar 6a (strain ATCC BAA-680 / CLIP 11262), this protein is NAD-dependent glycerol dehydrogenase.